A 938-amino-acid polypeptide reads, in one-letter code: Auxilin (938 aa).

Residues 19–41 are disordered; sequence AAAGENRMKDSENKGASSPDMEP. A run of 3 repeats spans residues 61–64, 65–68, and 69–72. The segment at 61–72 is 3 X 4 AA approximate tandem repeats; that stretch reads NLKDNLKDTLKD. The region spanning 80–247 is the Phosphatase tensin-type domain; sequence SVSSYTKGDL…GYMCDLLADK (168 aa). The residue at position 137 (Ser-137) is a Phosphoserine. Residue Cys-189 is the Phosphocysteine intermediate of the active site. The C2 tensin-type domain maps to 253 to 391; sequence FKPLTIKAIT…FQVTLDIEVQ (139 aa). The short motif at 434 to 442 is the SH3-binding element; that stretch reads PADLPPDHP. The segment at 467–801 is disordered; the sequence is EEDHAALVNQ…GKGSTNLEGK (335 aa). Ser-478 and Ser-481 each carry phosphoserine. The segment covering 531-548 has biased composition (polar residues); the sequence is DVSTNFSSLAAPPSNSEL. Over residues 559 to 569 the composition is skewed to low complexity; sequence TGPAQAGQAGV. Polar residues-rich tracts occupy residues 579–596 and 624–654; these read VSAQ…SASP and FLNT…TPAV. A Phosphoserine modification is found at Ser-595. A compositionally biased stretch (low complexity) spans 679 to 694; that stretch reads SAATSPTGSSHGTPTH. Polar residues predominate over residues 754-781; the sequence is NWQQTQSKPQSSMPHSSPQNRPNYNVSF. Residues 874 to 938 form the J domain; sequence TKWKPVGMAD…FENQGQKPLY (65 aa).

In terms of assembly, forms a complex composed of HSPA8, CLTC and DNAJC6. Interacts with HSPA8/HSC70 in an ATP-dependent manner; this interaction stimulates the HSPA8's ATPase activity. Interacts with CLTC; this interaction produces a local change in heavy-chain contacts, creating a detectable global distortion of the clathrin coat. Interacts with AP2A2. Interacts with DNM1(GTP-bound form); this interaction allows clathrin-coated vesicle (CCV) formation at the plasma membrane. Post-translationally, the N-terminus is blocked. In terms of processing, phosphorylation at Ser-595 modulates its ability to bind CLTC and therefore the synaptic vesicle endocytosis (SVE).

It localises to the cytoplasmic vesicle. The protein resides in the clathrin-coated vesicle. Its function is as follows. May act as a protein phosphatase and/or a lipid phosphatase. Co-chaperone that recruits HSPA8/HSC70 to clathrin-coated vesicles (CCVs) and promotes the ATP-dependent dissociation of clathrin from CCVs and participates in clathrin-mediated endocytosis of synaptic vesicles and their recycling and also in intracellular trafficking. Firstly, binds tightly to the clathrin cages, at a ratio of one DNAJC6 per clathrin triskelion. The HSPA8:ATP complex then binds to the clathrin-auxilin cage, initially at a ratio of one HSPA8 per triskelion leading to ATP hydrolysis stimulation and causing a conformational change in the HSPA8. This cycle is repeated three times to drive to a complex containing the clathrin-auxilin cage associated to three HSPA8:ADP complex. The ATP hydrolysis of the third HSPA8:ATP complex leads to a concerted dismantling of the cage into component triskelia. Then, dissociates from the released triskelia and be recycled to initiate another cycle of HSPA8's recruitment. Also acts during the early steps of clathrin-coated vesicle (CCV) formation through its interaction with the GTP bound form of DNM1. The protein is Auxilin of Mus musculus (Mouse).